We begin with the raw amino-acid sequence, 517 residues long: Sterol 14-alpha demethylase CYP51C (517 aa).

Residues T10–V30 traverse the membrane as a helical segment. Lanosterol is bound at residue Y115. G300 serves as a coordination point for itraconazole. C458 contributes to the heme binding site.

The protein belongs to the cytochrome P450 family. The cofactor is heme.

It localises to the endoplasmic reticulum membrane. It functions in the pathway steroid metabolism; ergosterol biosynthesis. In terms of biological role, together with cyp51A and cyp51B, encodes the sterol 14alpha-demethylase that plays a critical role in the third module of ergosterol biosynthesis pathway, being ergosterol the major sterol component in fungal membranes that participates in a variety of functions. Cyp51C does not seem to encode an active sterol 14-alpha-demethylase, but can impact indirectly on sterol 14alpha-demethylation, and is required for full virulence on host wheat ears, but not on Arabidopsis floral tissue or the fruits of apple and tomato. The third module or late pathway involves the ergosterol synthesis itself through consecutive reactions that mainly occur in the endoplasmic reticulum (ER) membrane. In filamentous fungi, during the initial step of this module, lanosterol (lanosta-8,24-dien-3beta-ol) can be metabolized to eburicol. Sterol 14alpha-demethylase catalyzes the three-step oxidative removal of the 14alpha-methyl group (C-32) of both these sterols in the form of formate, and converts eburicol and lanosterol to 14-demethyleburicol (4,4,24-trimethylergosta-8,14,24(28)-trienol) and 4,4-dimethyl-5alpha-cholesta-8,14,24-trien-3beta-ol, respectively, which are further metabolized by other enzymes in the pathway to ergosterol. This is Sterol 14-alpha demethylase CYP51C from Gibberella zeae (strain ATCC MYA-4620 / CBS 123657 / FGSC 9075 / NRRL 31084 / PH-1) (Wheat head blight fungus).